Here is a 434-residue protein sequence, read N- to C-terminus: Urokinase-type plasminogen activator (434 aa).

The N-terminal stretch at 1–20 (MKLIIFLTVTLCTLVTGLDS) is a signal peptide. In terms of domain architecture, EGF-like spans 36 to 72 (QHRECQCLNGGTCITYRFFSQIKRCLCPEGYGGLHCE). Disulfide bonds link Cys40–Cys48, Cys42–Cys60, Cys62–Cys71, Cys79–Cys158, Cys96–Cys139, Cys128–Cys152, Cys162–Cys296, Cys202–Cys218, Cys210–Cys285, Cys310–Cys379, Cys342–Cys358, and Cys369–Cys397. One can recognise a Kringle domain in the interval 79-158 (CYSGNGEDYR…ETPCSTIEKC (80 aa)). The interval 159–172 (ERTCGQRSFSKYFK) is connecting peptide. A Peptidase S1 domain is found at 173 to 421 (IVGGSQAEVE…YLNWIDSNMN (249 aa)). His217 acts as the Charge relay system in catalysis. Residue Asn228 is glycosylated (N-linked (GlcNAc...) asparagine). Asp272 acts as the Charge relay system in catalysis. Ser373 (charge relay system) is an active-site residue.

This sequence belongs to the peptidase S1 family.

Its subcellular location is the secreted. It carries out the reaction Specific cleavage of Arg-|-Val bond in plasminogen to form plasmin.. Specifically cleaves the zymogen plasminogen to form the active enzyme plasmin. In Gallus gallus (Chicken), this protein is Urokinase-type plasminogen activator (PLAU).